The sequence spans 336 residues: Aspartate carbamoyltransferase catalytic subunit (336 aa).

Residues arginine 72 and threonine 73 each coordinate carbamoyl phosphate. Residue lysine 100 participates in L-aspartate binding. Positions 122, 155, and 158 each coordinate carbamoyl phosphate. Residues arginine 188 and arginine 242 each coordinate L-aspartate. Carbamoyl phosphate contacts are provided by glycine 288 and proline 289.

This sequence belongs to the aspartate/ornithine carbamoyltransferase superfamily. ATCase family. Heterododecamer (2C3:3R2) of six catalytic PyrB chains organized as two trimers (C3), and six regulatory PyrI chains organized as three dimers (R2).

The enzyme catalyses carbamoyl phosphate + L-aspartate = N-carbamoyl-L-aspartate + phosphate + H(+). Its pathway is pyrimidine metabolism; UMP biosynthesis via de novo pathway; (S)-dihydroorotate from bicarbonate: step 2/3. Its function is as follows. Catalyzes the condensation of carbamoyl phosphate and aspartate to form carbamoyl aspartate and inorganic phosphate, the committed step in the de novo pyrimidine nucleotide biosynthesis pathway. The chain is Aspartate carbamoyltransferase catalytic subunit from Lactobacillus leichmannii.